A 406-amino-acid polypeptide reads, in one-letter code: Probable endo-xylogalacturonan hydrolase A (406 aa).

The signal sequence occupies residues 1–18; it reads MISLNSIFLLSLVGLSRA. Residues 20–49 form a disordered region; it reads PSRSETSPDRTIKPRAACTPTAGGSSSTDD. 6 PbH1 repeats span residues 183-213, 214-235, 237-257, 266-289, 299-320, and 368-390; these read TSNAQFTSLTMDATSNSDNLPKNTDAFDIGA, STYVTISSVAITNDDDCVAFKP, ANYVTVENVSCTGSHGISVGS, VQNVYARNITMINSSKAAGIKTYP, VKNATFEDFIVDGCDYAFQIQS, and TCDVTISGFEVKAPSGDAKILCG. Asp-228 serves as the catalytic Proton donor. N-linked (GlcNAc...) asparagine glycosylation is present at Asn-244. His-251 is an active-site residue. 3 N-linked (GlcNAc...) asparagine glycosylation sites follow: Asn-273, Asn-278, and Asn-301.

The protein belongs to the glycosyl hydrolase 28 family.

It localises to the secreted. Functionally, pectinolytic enzyme involved in the degradation of xylogalacturonan (xga), a galacturonan backbone heavily substituted with xylose, and which is one important component of the hairy regions of pectin. Activity requires a galacturonic acid backbone substituted with xylose. This Aspergillus oryzae (strain ATCC 42149 / RIB 40) (Yellow koji mold) protein is Probable endo-xylogalacturonan hydrolase A (xghA).